Here is an 824-residue protein sequence, read N- to C-terminus: Intraflagellar transport protein 88 homolog (824 aa).

The tract at residues 113 to 134 is disordered; it reads FDPLSQSRGPASPLEAKKKDSP. TPR repeat units lie at residues 197 to 230, 233 to 266, 272 to 305, 307 to 338, 415 to 448, 450 to 483, 484 to 517, 518 to 551, 552 to 585, 586 to 619, 620 to 653, and 654 to 687; these read YSVLFNLASQYSVNEMYAEALNTYQVIVKNKMFS, GILKMNMGNIYLKQRNYSKAIKFYRMALDQVPSV, IKIMQNIGVTFIQAGQYSDAINSYEHIMSMAPNL, AGYNLTICYFAIGDREKMKKAFQKLITVPLEI, NDLEINKAVTYLRQKDYNQAVEILKVLEKKDSRV, SAAATNLSALYYMGKDFAQASSYADIAVNSDRYN, PAALTNKGNTVFANGDYEKAAEFYKEALRNDSSC, TEALYNIGLTYEKLNRLDEALDCFLKLHAILRNS, AEVLYQIANIYELMENPSQAIEWLMQVVSVIPTD, PQVLSKLGELYDREGDKSQAFQYYYESYRYFPCN, IEVIEWLGAYYIDTQFWEKAIQYFERASLIQPTQ, and VKWQLMVASCFRRSGNYQKALDTYKDTHRKFPEN. Residues 724 to 824 are disordered; the sequence is EQRIKSGRDG…EELGDDLLPE (101 aa). Polar residues predominate over residues 748-757; that stretch reads DSGQNYSASS. The segment covering 797–808 has biased composition (basic and acidic residues); the sequence is ERPKTAAKKRID. Positions 809 to 824 are enriched in acidic residues; the sequence is EDDFADEELGDDLLPE.

As to quaternary structure, component of the IFT complex B, at least composed of IFT20, IFT22, IFT25, IFT27, IFT46, IFT52, TRAF3IP1/IFT54, IFT57, IFT74, IFT80, IFT81, and IFT88. Interacts with IFT20, IFT22, IFT25, IFT27, IFT52, TRAF3IP1, IFT74, IFT80 and IFT81. Interacts with IFT172. Interacts with IFT57. Interacts with IFT46. Interacts with IFT70B. Interacts with C2CD3. Interacts with ENTR1 (via N-terminus). Interacts with LRRC56. Interacts with DZIP1. Interacts with CCDC38. Interacts with CCDC146. Interacts with CFAP53. Expressed in the heart, brain, liver, lung, kidney, skeletal muscle and pancreas.

It is found in the cytoplasm. It localises to the cytoskeleton. The protein resides in the microtubule organizing center. Its subcellular location is the centrosome. The protein localises to the centriole. It is found in the cell projection. It localises to the cilium. The protein resides in the cilium basal body. Its subcellular location is the flagellum. Its function is as follows. Positively regulates primary cilium biogenesis. Also involved in autophagy since it is required for trafficking of ATG16L and the expansion of the autophagic compartment. In Homo sapiens (Human), this protein is Intraflagellar transport protein 88 homolog (IFT88).